The sequence spans 218 residues: Protein THO1 (218 aa).

Residues 4–38 form the SAP domain; that stretch reads YSSLTVVQLKDLLTKRNLSVGGLKNELVQRLIKDD. Serine 22 is modified (phosphoserine). 2 disordered regions span residues 37-123 and 177-218; these read DDEE…LSPE and LVSR…GYRR. The segment covering 47-57 has biased composition (polar residues); that stretch reads VSPQEQNQEQG. Phosphoserine is present on residues serine 58 and serine 68. Basic and acidic residues predominate over residues 72-96; it reads TEKKEVSSEPKETNEPKEENKDVQK. Low complexity-rich tracts occupy residues 102 to 122 and 186 to 203; these read SATASENEQAAASTAAPALSP and SGNNGKFKNRNKNANNRS. Residues 204-218 are compositionally biased toward basic residues; it reads RVSKNRRGNRSGYRR.

It belongs to the SAP domain-containing ribonucleoprotein family. In terms of assembly, interacts with SUB2 in the presence of RNA; this interaction facilitates RNA binding of SUB2.

Its function is as follows. Facilitates RNA binding of SUB2 and likely plays a role in mRNA export. Suppressor of the transcriptional defect of HPR1 by overexpression. The protein is Protein THO1 (THO1) of Saccharomyces cerevisiae (strain ATCC 204508 / S288c) (Baker's yeast).